Here is a 172-residue protein sequence, read N- to C-terminus: Putative phosphoesterase BCAH820_1309 (172 aa).

His-34 (proton donor) is an active-site residue. 2 short sequence motifs (HXTX) span residues His-34–Leu-37 and His-115–Ile-118. Residue His-115 is the Proton acceptor of the active site.

It belongs to the 2H phosphoesterase superfamily. YjcG family.

In Bacillus cereus (strain AH820), this protein is Putative phosphoesterase BCAH820_1309.